The chain runs to 136 residues: Large-conductance mechanosensitive channel (136 aa).

Transmembrane regions (helical) follow at residues 15–35 (IDLA…NSIV), 38–58 (IFMP…MFIQ), and 80–100 (GHFI…FFFV).

This sequence belongs to the MscL family. In terms of assembly, homopentamer.

It is found in the cell inner membrane. Functionally, channel that opens in response to stretch forces in the membrane lipid bilayer. May participate in the regulation of osmotic pressure changes within the cell. The polypeptide is Large-conductance mechanosensitive channel (Bartonella tribocorum (strain CIP 105476 / IBS 506)).